We begin with the raw amino-acid sequence, 181 residues long: MPNNEAKFSVNQPLKTQKLFIGVQIFFRIVAIAASVASSWLMITSKQVIDIGGIVLDARYSYSPEFKFLAFTNIVVGCFSLLSLLFLVLVVRQGSNPNHYFFLFLHDLAMMSLVVGGCAAATTVGFLGKHGNSHTGWMQICDNFGKFCNRAQTSVTISYLNLICLSILTITSASKSRKMEA.

Residues methionine 1–lysine 18 lie on the Cytoplasmic side of the membrane. The chain crosses the membrane as a helical span at residues leucine 19–serine 39. Over tryptophan 40 to alanine 70 the chain is Extracellular. A helical membrane pass occupies residues phenylalanine 71 to valine 91. Topologically, residues arginine 92–tyrosine 100 are cytoplasmic. A helical transmembrane segment spans residues phenylalanine 101 to alanine 121. Over threonine 122–glutamine 152 the chain is Extracellular. Residues threonine 153–alanine 173 form a helical membrane-spanning segment. Over serine 174–alanine 181 the chain is Cytoplasmic.

This sequence belongs to the Casparian strip membrane proteins (CASP) family. As to quaternary structure, homodimer and heterodimers.

Its subcellular location is the cell membrane. This chain is CASP-like protein 1F1, found in Populus trichocarpa (Western balsam poplar).